The sequence spans 399 residues: Probable aspartate/prephenate aminotransferase (399 aa).

L-aspartate is bound by residues glycine 39, tryptophan 125, and asparagine 175. Residue lysine 239 is modified to N6-(pyridoxal phosphate)lysine. Arginine 375 serves as a coordination point for L-aspartate.

Belongs to the class-I pyridoxal-phosphate-dependent aminotransferase family. As to quaternary structure, homodimer. It depends on pyridoxal 5'-phosphate as a cofactor.

It localises to the cytoplasm. The enzyme catalyses L-aspartate + 2-oxoglutarate = oxaloacetate + L-glutamate. The catalysed reaction is L-arogenate + 2-oxoglutarate = prephenate + L-glutamate. Its function is as follows. Catalyzes the reversible conversion of aspartate and 2-oxoglutarate to glutamate and oxaloacetate. Can also transaminate prephenate in the presence of glutamate. The chain is Probable aspartate/prephenate aminotransferase (aatA) from Rickettsia bellii (strain RML369-C).